The following is a 177-amino-acid chain: Large ribosomal subunit protein uL6 (177 aa).

The protein belongs to the universal ribosomal protein uL6 family. As to quaternary structure, part of the 50S ribosomal subunit.

This protein binds to the 23S rRNA, and is important in its secondary structure. It is located near the subunit interface in the base of the L7/L12 stalk, and near the tRNA binding site of the peptidyltransferase center. The chain is Large ribosomal subunit protein uL6 from Pseudomonas syringae pv. syringae (strain B728a).